The primary structure comprises 324 residues: Endochitinase B (324 aa).

Positions 1-23 are cleaved as a signal peptide; that stretch reads MRLREFTALSSLLFSLLLLSASA. The Chitin-binding type-1 domain occupies 24–65; that stretch reads EQCGSQAGGARCASGLCCSKFGWCGNTNDYCGPGNCQSQCPG. 4 cysteine pairs are disulfide-bonded: C26-C41, C35-C47, C40-C54, and C59-C63. Residues P67 and P69 each carry the 4-hydroxyproline modification. 3 cysteine pairs are disulfide-bonded: C96–C158, C170–C178, and C277–C309. E140 acts as the Proton donor in catalysis. Positions 318 to 324 are cleaved as a propeptide — removed in mature form; it reads GLLVDTM.

The protein belongs to the glycosyl hydrolase 19 family. Chitinase class I subfamily. Post-translationally, the 4-hydroxyproline residues are not glycosylated in this plant vacuolar protein.

The protein resides in the vacuole. It catalyses the reaction Random endo-hydrolysis of N-acetyl-beta-D-glucosaminide (1-&gt;4)-beta-linkages in chitin and chitodextrins.. In terms of biological role, defense against chitin-containing fungal pathogens. The sequence is that of Endochitinase B (CHN50) from Nicotiana tabacum (Common tobacco).